The chain runs to 311 residues: Oxygen-dependent coproporphyrinogen-III oxidase (311 aa).

Ser100 provides a ligand contact to substrate. His104 and His114 together coordinate a divalent metal cation. His114 (proton donor) is an active-site residue. 116–118 contacts substrate; the sequence is NVR. Residues His153 and His183 each contribute to the a divalent metal cation site. Residues 248–283 form an important for dimerization region; that stretch reads YAEFNLVYDRGTLFGLQSGGRTESILMSLPPIVHWE. 266–268 lines the substrate pocket; the sequence is GGR.

This sequence belongs to the aerobic coproporphyrinogen-III oxidase family. Homodimer. A divalent metal cation serves as cofactor.

It localises to the cytoplasm. It catalyses the reaction coproporphyrinogen III + O2 + 2 H(+) = protoporphyrinogen IX + 2 CO2 + 2 H2O. It functions in the pathway porphyrin-containing compound metabolism; protoporphyrin-IX biosynthesis; protoporphyrinogen-IX from coproporphyrinogen-III (O2 route): step 1/1. In terms of biological role, involved in the heme biosynthesis. Catalyzes the aerobic oxidative decarboxylation of propionate groups of rings A and B of coproporphyrinogen-III to yield the vinyl groups in protoporphyrinogen-IX. The protein is Oxygen-dependent coproporphyrinogen-III oxidase of Legionella pneumophila (strain Corby).